The primary structure comprises 98 residues: Small ribosomal subunit protein bS6 (98 aa).

The protein belongs to the bacterial ribosomal protein bS6 family.

Its function is as follows. Binds together with bS18 to 16S ribosomal RNA. The polypeptide is Small ribosomal subunit protein bS6 (Lactobacillus helveticus (strain DPC 4571)).